The sequence spans 425 residues: Serine--tRNA ligase (425 aa).

Residue 228 to 230 (TAE) participates in L-serine binding. 259–261 (RSE) serves as a coordination point for ATP. Residue E282 coordinates L-serine. 346–349 (EIAS) provides a ligand contact to ATP. S382 contributes to the L-serine binding site.

Belongs to the class-II aminoacyl-tRNA synthetase family. Type-1 seryl-tRNA synthetase subfamily. In terms of assembly, homodimer. The tRNA molecule binds across the dimer.

It is found in the cytoplasm. The catalysed reaction is tRNA(Ser) + L-serine + ATP = L-seryl-tRNA(Ser) + AMP + diphosphate + H(+). It carries out the reaction tRNA(Sec) + L-serine + ATP = L-seryl-tRNA(Sec) + AMP + diphosphate + H(+). It functions in the pathway aminoacyl-tRNA biosynthesis; selenocysteinyl-tRNA(Sec) biosynthesis; L-seryl-tRNA(Sec) from L-serine and tRNA(Sec): step 1/1. Its function is as follows. Catalyzes the attachment of serine to tRNA(Ser). Is also able to aminoacylate tRNA(Sec) with serine, to form the misacylated tRNA L-seryl-tRNA(Sec), which will be further converted into selenocysteinyl-tRNA(Sec). The sequence is that of Serine--tRNA ligase from Rickettsia canadensis (strain McKiel).